The primary structure comprises 164 residues: Large ribosomal subunit protein uL23 (164 aa).

The segment at 1-41 (MPAKAASAAASKKNSAPKSAVSKKVAKKGAPAAAAKPTKVV) is disordered.

This sequence belongs to the universal ribosomal protein uL23 family.

Functionally, this protein binds to a specific region on the 26S rRNA. This is Large ribosomal subunit protein uL23 (RPL23A) from Trypanosoma brucei brucei.